Consider the following 101-residue polypeptide: ATP-dependent Clp protease adapter protein ClpS (101 aa).

It belongs to the ClpS family. In terms of assembly, binds to the N-terminal domain of the chaperone ClpA.

In terms of biological role, involved in the modulation of the specificity of the ClpAP-mediated ATP-dependent protein degradation. The sequence is that of ATP-dependent Clp protease adapter protein ClpS from Mycobacterium bovis (strain ATCC BAA-935 / AF2122/97).